Here is a 61-residue protein sequence, read N- to C-terminus: Antimicrobial peptide 1 (61 aa).

A signal peptide spans 1 to 24 (LPVAFLKFAIVLILFIAMSAMIEA). Position 25 is a pyrrolidone carboxylic acid (Q25). Intrachain disulfides connect C26-C43, C33-C47, and C42-C58.

It belongs to the AMP family. Homodimer. In terms of processing, three disulfide bonds are present. In terms of tissue distribution, found only in seeds.

The protein localises to the secreted. Functionally, possesses antifungal activity and is also active on two tested Gram-positive bacteria but is non-toxic for Gram-negative bacteria and cultured human cells. The protein is Antimicrobial peptide 1 (AMP1) of Mirabilis jalapa (Garden four-o'clock).